The sequence spans 357 residues: Protein RecA (357 aa).

67 to 74 (GPESSGKT) is a binding site for ATP. The tract at residues 334 to 357 (ELKPAAAGNSHDEDELAGEGKEEF) is disordered.

Belongs to the RecA family.

It is found in the cytoplasm. In terms of biological role, can catalyze the hydrolysis of ATP in the presence of single-stranded DNA, the ATP-dependent uptake of single-stranded DNA by duplex DNA, and the ATP-dependent hybridization of homologous single-stranded DNAs. It interacts with LexA causing its activation and leading to its autocatalytic cleavage. This chain is Protein RecA, found in Pectobacterium atrosepticum (strain SCRI 1043 / ATCC BAA-672) (Erwinia carotovora subsp. atroseptica).